Consider the following 139-residue polypeptide: Transcription antitermination protein NusB (139 aa).

It belongs to the NusB family.

Functionally, involved in transcription antitermination. Required for transcription of ribosomal RNA (rRNA) genes. Binds specifically to the boxA antiterminator sequence of the ribosomal RNA (rrn) operons. In Cronobacter sakazakii (strain ATCC BAA-894) (Enterobacter sakazakii), this protein is Transcription antitermination protein NusB.